Consider the following 227-residue polypeptide: Cytochrome c oxidase subunit 2 (227 aa).

At 1-14 (MAYPFQLGLQDATS) the chain is on the mitochondrial intermembrane side. Residues 15-45 (PIMEELMNFHDHTLMIVFLISSLVLYIISLM) traverse the membrane as a helical segment. Residues 46-59 (LTTKLTHTSTMDAQ) are Mitochondrial matrix-facing. Residues 60–87 (EVETIWTILPAVILILIALPSLRILYMM) traverse the membrane as a helical segment. Topologically, residues 88–227 (DEINNPVLTV…NFENWSTSMI (140 aa)) are mitochondrial intermembrane. H161, C196, E198, C200, H204, and M207 together coordinate Cu cation. Mg(2+) is bound at residue E198.

This sequence belongs to the cytochrome c oxidase subunit 2 family. In terms of assembly, component of the cytochrome c oxidase (complex IV, CIV), a multisubunit enzyme composed of 14 subunits. The complex is composed of a catalytic core of 3 subunits MT-CO1, MT-CO2 and MT-CO3, encoded in the mitochondrial DNA, and 11 supernumerary subunits COX4I, COX5A, COX5B, COX6A, COX6B, COX6C, COX7A, COX7B, COX7C, COX8 and NDUFA4, which are encoded in the nuclear genome. The complex exists as a monomer or a dimer and forms supercomplexes (SCs) in the inner mitochondrial membrane with NADH-ubiquinone oxidoreductase (complex I, CI) and ubiquinol-cytochrome c oxidoreductase (cytochrome b-c1 complex, complex III, CIII), resulting in different assemblies (supercomplex SCI(1)III(2)IV(1) and megacomplex MCI(2)III(2)IV(2)). Found in a complex with TMEM177, COA6, COX18, COX20, SCO1 and SCO2. Interacts with TMEM177 in a COX20-dependent manner. Interacts with COX20. Interacts with COX16. Cu cation serves as cofactor.

It is found in the mitochondrion inner membrane. The enzyme catalyses 4 Fe(II)-[cytochrome c] + O2 + 8 H(+)(in) = 4 Fe(III)-[cytochrome c] + 2 H2O + 4 H(+)(out). Component of the cytochrome c oxidase, the last enzyme in the mitochondrial electron transport chain which drives oxidative phosphorylation. The respiratory chain contains 3 multisubunit complexes succinate dehydrogenase (complex II, CII), ubiquinol-cytochrome c oxidoreductase (cytochrome b-c1 complex, complex III, CIII) and cytochrome c oxidase (complex IV, CIV), that cooperate to transfer electrons derived from NADH and succinate to molecular oxygen, creating an electrochemical gradient over the inner membrane that drives transmembrane transport and the ATP synthase. Cytochrome c oxidase is the component of the respiratory chain that catalyzes the reduction of oxygen to water. Electrons originating from reduced cytochrome c in the intermembrane space (IMS) are transferred via the dinuclear copper A center (CU(A)) of subunit 2 and heme A of subunit 1 to the active site in subunit 1, a binuclear center (BNC) formed by heme A3 and copper B (CU(B)). The BNC reduces molecular oxygen to 2 water molecules using 4 electrons from cytochrome c in the IMS and 4 protons from the mitochondrial matrix. The protein is Cytochrome c oxidase subunit 2 (MT-CO2) of Apodemus mystacinus (Broad-toothed field mouse).